We begin with the raw amino-acid sequence, 545 residues long: Membrane protein insertase YidC (545 aa).

4 consecutive transmembrane segments (helical) span residues 350–370 (IIGNWGWAIIVLTIIVKAVLY), 424–444 (LPMLLQIPVFIGLYWALFASV), 461–481 (ADPYYILPIIMAATMFAQTYL), and 498–518 (PLVFSVMFFFFPAGLVLYWVV).

It belongs to the OXA1/ALB3/YidC family. Type 1 subfamily. As to quaternary structure, interacts with the Sec translocase complex via SecD. Specifically interacts with transmembrane segments of nascent integral membrane proteins during membrane integration.

Its subcellular location is the cell inner membrane. In terms of biological role, required for the insertion and/or proper folding and/or complex formation of integral membrane proteins into the membrane. Involved in integration of membrane proteins that insert both dependently and independently of the Sec translocase complex, as well as at least some lipoproteins. Aids folding of multispanning membrane proteins. The polypeptide is Membrane protein insertase YidC (Neisseria meningitidis serogroup B (strain ATCC BAA-335 / MC58)).